The chain runs to 299 residues: UDP-N-acetylenolpyruvoylglucosamine reductase (299 aa).

One can recognise an FAD-binding PCMH-type domain in the interval 28 to 193 (IGGPVDLMVL…VSALMQLHKE (166 aa)). Arg172 is an active-site residue. The active-site Proton donor is Ser222. Glu292 is an active-site residue.

This sequence belongs to the MurB family. FAD is required as a cofactor.

Its subcellular location is the cytoplasm. It catalyses the reaction UDP-N-acetyl-alpha-D-muramate + NADP(+) = UDP-N-acetyl-3-O-(1-carboxyvinyl)-alpha-D-glucosamine + NADPH + H(+). It functions in the pathway cell wall biogenesis; peptidoglycan biosynthesis. Its function is as follows. Cell wall formation. In Syntrophomonas wolfei subsp. wolfei (strain DSM 2245B / Goettingen), this protein is UDP-N-acetylenolpyruvoylglucosamine reductase.